The chain runs to 271 residues: MNMLTEAAVEKALDHKMSNVPYKMIGKDVSVYYGEKRALFDVNLNVRENTVTALIGPSGCGKSTFLRCLNRMNDTIDGCRVTGKITLDTDDVYDPDIDVVELRARVGMVFQKPNPFPKTIYENVSYGPRIHGLAKSKADLDQIVETSLQRAGLWNEVKDRVHESGTGLSGGQQQRLCIARAVAVSPEVILMDEPCSALDPIATAKVEELIHELRENYTIVIVTHSMQQAARVSQRTAMFHLGNLVEENDTDKMFTNPDDPRTQDYIMGRFG.

One can recognise an ABC transporter domain in the interval 24 to 266 (MIGKDVSVYY…PDDPRTQDYI (243 aa)). Residue 56-63 (GPSGCGKS) coordinates ATP.

The protein belongs to the ABC transporter superfamily. Phosphate importer (TC 3.A.1.7) family. As to quaternary structure, the complex is composed of two ATP-binding proteins (PstB), two transmembrane proteins (PstC and PstA) and a solute-binding protein (PstS).

The protein localises to the cell inner membrane. It carries out the reaction phosphate(out) + ATP + H2O = ADP + 2 phosphate(in) + H(+). In terms of biological role, part of the ABC transporter complex PstSACB involved in phosphate import. Responsible for energy coupling to the transport system. This chain is Phosphate import ATP-binding protein PstB 1, found in Rhizobium johnstonii (strain DSM 114642 / LMG 32736 / 3841) (Rhizobium leguminosarum bv. viciae).